We begin with the raw amino-acid sequence, 293 residues long: MTSSYVGRFAPTPSGYLHFGSLVAAVASYLDARAVGGRWLVRMEDLDPPREVPGAQRAILETLERYGFEWDGAVERQSERFPAYASVIEQLLRSGLAYACTCSRKQLEDFAGIYPGFCRDAGHARDDAAIRLRVPELEYRFVDRVQGEVCQHLGREVGDFVIQRRDGLYAYQLAVVLDDAWQGITDIVRGADLLDSTPRQLYLQELLGLSQPRYLHVPLIVQPDGHKLGKSYRSPPLPAEQAAVPLTRALRALGQRPPAELAEGSAGEALAWGVAHWDATRIPRRATLPEESL.

Residues 8–12 (RFAPT) and Glu44 each bind L-glutamate. Positions 11–21 (PTPSGYLHFGS) match the 'HIGH' region motif. Cys100, Cys102, Tyr114, and Cys118 together coordinate Zn(2+). L-glutamate-binding residues include Tyr171 and Arg189. The short motif at 227–231 (KLGKS) is the 'KMSKS' region element. Lys230 serves as a coordination point for ATP.

Belongs to the class-I aminoacyl-tRNA synthetase family. GluQ subfamily. It depends on Zn(2+) as a cofactor.

Functionally, catalyzes the tRNA-independent activation of glutamate in presence of ATP and the subsequent transfer of glutamate onto a tRNA(Asp). Glutamate is transferred on the 2-amino-5-(4,5-dihydroxy-2-cyclopenten-1-yl) moiety of the queuosine in the wobble position of the QUC anticodon. In Pseudomonas paraeruginosa (strain DSM 24068 / PA7) (Pseudomonas aeruginosa (strain PA7)), this protein is Glutamyl-Q tRNA(Asp) synthetase.